The chain runs to 390 residues: Probable tRNA pseudouridine synthase D (390 aa).

Aspartate 93 functions as the Nucleophile in the catalytic mechanism. Positions 166–353 constitute a TRUD domain; it reads HVLNYFGIQR…YGTRRKLITP (188 aa).

Belongs to the pseudouridine synthase TruD family.

It catalyses the reaction uridine(13) in tRNA = pseudouridine(13) in tRNA. Could be responsible for synthesis of pseudouridine from uracil-13 in transfer RNAs. The chain is Probable tRNA pseudouridine synthase D from Methanococcus vannielii (strain ATCC 35089 / DSM 1224 / JCM 13029 / OCM 148 / SB).